The sequence spans 776 residues: MAAIAPAWPLDSLVASSPYWGLREQSFSQAADTLRLVADSPLHLPRGEYLAAWRRGEISAAALETALSETGWTGGAQAWLDAEPRDVDPVPPPRLLAACHREAAGPLSAQSWTDVVIQQISQYCAAWFDRDQANWHLDHERGFYAAWLEQMRHPYGLSALPERREQLRLRAERLPGDAEAMLAAGLAQLQAEPEWLKPWLQALLMRNNGWAAWCAYLGWQAGLKGETDGHLRQLLAIQMAWECLLDDGARGPDSAWAAWHRDWGLRLHGRADPRTLIWQRAHELSLHAPLAQALCRESAAEDGTRPAMQAVFCIDVRSEPLRRALEQTVPASRTYGFAGFFGLPLAYRVPGSDVAQPRLPVLLAPGWEASAAPASKPSAARRGWRAFQRSPLSGFALVESAGLAKLAALAGRSKARGRQAALPQLDPWLTPDSAKPVPRDGLGLERRAEIVSGLLPAMGLAGALAPWVLLVGHASHVSNNPQAAALQCGACGGHGGHQHVRLLAGWLNDPALRERLAALGRAIPADTVFLPALHLTHSDEILLLDADTLSADARARLPGLQAQLRAASALARRRRAPLVGLAPEADDAILLNKMRQKGDDWAETRPEWGLAGNALFIAAPRAKTRKLDLGGRAFLHEYDWRADPDGKGLQAILAAPMVVAHWINMQYFASTADPRRFGSGNKLLHNVVGGRIGVFEGNSGDLRIGLAWQSVHDGQRLRHAPLRLAACIDAPPDRLAEALAAQPVPRQLAENGWLHLYCVHGDTPLRWHADGGWRHD.

The Zn(2+) site is built by C313, D315, H473, and C488.

It belongs to the inorganic carbon transporter (TC 9.A.2) DabA family. As to quaternary structure, forms a complex with DabB. Requires Zn(2+) as cofactor.

Its subcellular location is the cell inner membrane. Functionally, part of an energy-coupled inorganic carbon pump. This chain is Probable inorganic carbon transporter subunit DabA, found in Chromobacterium violaceum (strain ATCC 12472 / DSM 30191 / JCM 1249 / CCUG 213 / NBRC 12614 / NCIMB 9131 / NCTC 9757 / MK).